A 238-amino-acid polypeptide reads, in one-letter code: Uridylate kinase (238 aa).

12-15 (KLSG) contributes to the ATP binding site. Residue Gly-54 participates in UMP binding. 2 residues coordinate ATP: Gly-55 and Arg-59. UMP-binding positions include Asp-74 and 135 to 142 (TGNPYFTT). Residues Thr-162, Tyr-168, and Asp-171 each contribute to the ATP site.

It belongs to the UMP kinase family. In terms of assembly, homohexamer.

The protein localises to the cytoplasm. It catalyses the reaction UMP + ATP = UDP + ADP. It participates in pyrimidine metabolism; CTP biosynthesis via de novo pathway; UDP from UMP (UMPK route): step 1/1. Its activity is regulated as follows. Inhibited by UTP. In terms of biological role, catalyzes the reversible phosphorylation of UMP to UDP. The chain is Uridylate kinase from Nitratidesulfovibrio vulgaris (strain ATCC 29579 / DSM 644 / CCUG 34227 / NCIMB 8303 / VKM B-1760 / Hildenborough) (Desulfovibrio vulgaris).